Reading from the N-terminus, the 344-residue chain is Arginine N-succinyltransferase (344 aa).

Leu125 contributes to the succinyl-CoA binding site. Catalysis depends on His229, which acts as the Proton donor.

This sequence belongs to the arginine N-succinyltransferase family.

The enzyme catalyses succinyl-CoA + L-arginine = N(2)-succinyl-L-arginine + CoA + H(+). Its pathway is amino-acid degradation; L-arginine degradation via AST pathway; L-glutamate and succinate from L-arginine: step 1/5. Its function is as follows. Catalyzes the transfer of succinyl-CoA to arginine to produce N(2)-succinylarginine. The chain is Arginine N-succinyltransferase from Escherichia coli O6:K15:H31 (strain 536 / UPEC).